The sequence spans 2060 residues: Unconventional myosin-X (2060 aa).

Met-1 carries the post-translational modification N-acetylmethionine. The Myosin motor domain maps to 63–739; sequence EGVDDMASLT…LEQKLEKRRE (677 aa). Residues Asn-104, Tyr-113, 160–165, and Asn-215 each bind ATP; that span reads GAGKTE. An actin-binding region spans residues 619–641; that stretch reads LHSLMATLSSSNPFFVRCIKPNT. 3 IQ domains span residues 742–771, 765–794, and 788–817; these read IDRA…GVVT, VLCG…AAIV, and LKKA…EKRE. Residues 814 to 882 form an SAH region; the sequence is EKRELEERKR…LTRELEKQRE (69 aa). A coiled-coil region spans residues 883 to 933; sequence NKQVEEILRLEKEIEDLQRMKEQQELSLTEASLQKLQQLRDEELRRLEDEA. Residues Ser-961, Ser-964, and Ser-967 each carry the phosphoserine modification. Disordered regions lie at residues 971–1039 and 1064–1088; these read SELA…PYMN and SLHN…PSPD. Residues 991-1005 show a composition bias toward acidic residues; the sequence is PEEEVDEGFEADDDA. Polar residues predominate over residues 1064–1083; that stretch reads SLHNSSSGESTYCMPQNNGD. Thr-1160 bears the Phosphothreonine mark. PH domains lie at 1214–1312 and 1394–1499; these read EALK…QVHS and EFIV…NVTD. One can recognise a MyTH4 domain in the interval 1549 to 1697; the sequence is LPYGDINLNL…PSRDEIEALI (149 aa). The region spanning 1702–2046 is the FERM domain; sequence MTSTVYCHGG…AYISMIVKKR (345 aa).

Belongs to the TRAFAC class myosin-kinesin ATPase superfamily. Myosin family. As to quaternary structure, monomer, when in an inactive conformation in the cytosol. Homodimer in its active, membrane-bound conformation; antiparallel coiled coil-mediated dimer formation. Interacts with ECPAS. Interacts with DCC and ITGB5; the presence of DCC inhibits ITGB5 binding. Interacts with tubulin; ITGB5 or DCC binding inhibits tubulin binding. Interacts strongly with CALM3 and weakly with CALM, the CALM3 interaction is essential for function in filopodial extension and motility. Interacts with ITGB1, ITGB3 and ITGB5. Interacts with NEO1. Interacts with VASP.

Its subcellular location is the cytoplasm. It localises to the cytosol. The protein localises to the cell projection. The protein resides in the lamellipodium. It is found in the ruffle. Its subcellular location is the cytoskeleton. It localises to the filopodium tip. The protein localises to the cell cortex. The protein resides in the filopodium membrane. It is found in the cell membrane. Myosins are actin-based motor molecules with ATPase activity. Unconventional myosins serve in intracellular movements. MYO10 binds to actin filaments and actin bundles and functions as a plus end-directed motor. Moves with higher velocity and takes larger steps on actin bundles than on single actin filaments. The tail domain binds to membranous compartments containing phosphatidylinositol 3,4,5-trisphosphate or integrins, and mediates cargo transport along actin filaments. Regulates cell shape, cell spreading and cell adhesion. Stimulates the formation and elongation of filopodia. In hippocampal neurons it induces the formation of dendritic filopodia by trafficking the actin-remodeling protein VASP to the tips of filopodia, where it promotes actin elongation. Plays a role in formation of the podosome belt in osteoclasts. The chain is Unconventional myosin-X (Myo10) from Rattus norvegicus (Rat).